The sequence spans 160 residues: Transcription antitermination protein NusB (160 aa).

It belongs to the NusB family.

Involved in transcription antitermination. Required for transcription of ribosomal RNA (rRNA) genes. Binds specifically to the boxA antiterminator sequence of the ribosomal RNA (rrn) operons. This chain is Transcription antitermination protein NusB, found in Rhizobium etli (strain ATCC 51251 / DSM 11541 / JCM 21823 / NBRC 15573 / CFN 42).